Reading from the N-terminus, the 117-residue chain is Iron-sulfur cluster insertion protein ErpA (117 aa).

Cys45, Cys109, and Cys111 together coordinate iron-sulfur cluster.

The protein belongs to the HesB/IscA family. Homodimer. The cofactor is iron-sulfur cluster.

Functionally, required for insertion of 4Fe-4S clusters for at least IspG. The polypeptide is Iron-sulfur cluster insertion protein ErpA (Blochmanniella pennsylvanica (strain BPEN)).